The primary structure comprises 834 residues: Glycerol-3-phosphate acyltransferase (834 aa).

The HXXXXD motif signature appears at 309-314 (CHRSHI).

Belongs to the GPAT/DAPAT family.

It localises to the cell inner membrane. The enzyme catalyses sn-glycerol 3-phosphate + an acyl-CoA = a 1-acyl-sn-glycero-3-phosphate + CoA. It participates in phospholipid metabolism; CDP-diacylglycerol biosynthesis; CDP-diacylglycerol from sn-glycerol 3-phosphate: step 1/3. The sequence is that of Glycerol-3-phosphate acyltransferase from Pseudomonas fluorescens (strain ATCC BAA-477 / NRRL B-23932 / Pf-5).